We begin with the raw amino-acid sequence, 364 residues long: tRNA-specific 2-thiouridylase MnmA (364 aa).

ATP contacts are provided by residues 12-19 (GISGGVDS) and methionine 38. The segment at 98–100 (NPD) is interaction with target base in tRNA. Residue cysteine 103 is the Nucleophile of the active site. Cysteine 103 and cysteine 199 form a disulfide bridge. Glycine 127 provides a ligand contact to ATP. The segment at 149-151 (KEQ) is interaction with tRNA. Residue cysteine 199 is the Cysteine persulfide intermediate of the active site. Positions 311–312 (RY) are interaction with tRNA.

Belongs to the MnmA/TRMU family.

The protein localises to the cytoplasm. It catalyses the reaction S-sulfanyl-L-cysteinyl-[protein] + uridine(34) in tRNA + AH2 + ATP = 2-thiouridine(34) in tRNA + L-cysteinyl-[protein] + A + AMP + diphosphate + H(+). Catalyzes the 2-thiolation of uridine at the wobble position (U34) of tRNA, leading to the formation of s(2)U34. This Hahella chejuensis (strain KCTC 2396) protein is tRNA-specific 2-thiouridylase MnmA.